The following is a 352-amino-acid chain: Biotin synthase (352 aa).

Positions Asn-44–Lys-262 constitute a Radical SAM core domain. Cys-59, Cys-63, and Cys-66 together coordinate [4Fe-4S] cluster. Positions 103, 134, 194, and 266 each coordinate [2Fe-2S] cluster.

Belongs to the radical SAM superfamily. Biotin synthase family. As to quaternary structure, homodimer. [4Fe-4S] cluster serves as cofactor. [2Fe-2S] cluster is required as a cofactor.

The catalysed reaction is (4R,5S)-dethiobiotin + (sulfur carrier)-SH + 2 reduced [2Fe-2S]-[ferredoxin] + 2 S-adenosyl-L-methionine = (sulfur carrier)-H + biotin + 2 5'-deoxyadenosine + 2 L-methionine + 2 oxidized [2Fe-2S]-[ferredoxin]. It functions in the pathway cofactor biosynthesis; biotin biosynthesis; biotin from 7,8-diaminononanoate: step 2/2. Its function is as follows. Catalyzes the conversion of dethiobiotin (DTB) to biotin by the insertion of a sulfur atom into dethiobiotin via a radical-based mechanism. The polypeptide is Biotin synthase (Pseudomonas putida (strain W619)).